Reading from the N-terminus, the 428-residue chain is Cysteine--tRNA ligase (428 aa).

C23 is a Zn(2+) binding site. Residues 25–35 carry the 'HIGH' region motif; sequence PTVYNDLHLGN. Residues C196, H221, and E225 each coordinate Zn(2+). A 'KMSKS' region motif is present at residues 253–257; the sequence is KMSKS. An ATP-binding site is contributed by K256.

The protein belongs to the class-I aminoacyl-tRNA synthetase family. In terms of assembly, monomer. Zn(2+) is required as a cofactor.

The protein resides in the cytoplasm. The enzyme catalyses tRNA(Cys) + L-cysteine + ATP = L-cysteinyl-tRNA(Cys) + AMP + diphosphate. In Mycoplasma genitalium (strain ATCC 33530 / DSM 19775 / NCTC 10195 / G37) (Mycoplasmoides genitalium), this protein is Cysteine--tRNA ligase (cysS).